Reading from the N-terminus, the 199-residue chain is Probable GTP-binding protein EngB (199 aa).

An EngB-type G domain is found at 28–199 (DLPEIALAGR…DSWDAILEQV (172 aa)). Residues 36-43 (GRSNVGKS), 63-67 (GKTQL), 81-84 (DVPG), 148-151 (TKAD), and 180-182 (FSS) each bind GTP. Residues Ser-43 and Thr-65 each contribute to the Mg(2+) site.

This sequence belongs to the TRAFAC class TrmE-Era-EngA-EngB-Septin-like GTPase superfamily. EngB GTPase family. Mg(2+) serves as cofactor.

Functionally, necessary for normal cell division and for the maintenance of normal septation. The sequence is that of Probable GTP-binding protein EngB from Streptococcus pyogenes serotype M18 (strain MGAS8232).